Consider the following 480-residue polypeptide: Ammonium transporter 3 member 3 (480 aa).

11 helical membrane passes run 31–51 (SATL…GSIV), 59–79 (SAFM…VWAY), 135–155 (MVYF…GSLL), 169–189 (LWIT…GFLF), 198–218 (GGYV…YWVG), 233–253 (ILLV…FNGG), 265–287 (AVLN…DVFF), 292–314 (SVIG…AGLV), 318–337 (AAIV…MMVL), 361–381 (GFLG…SLFL), and 407–427 (LFVT…ISLI).

The protein belongs to the ammonia transporter channel (TC 1.A.11.2) family.

The protein localises to the membrane. In terms of biological role, involved in ammonium transport. The protein is Ammonium transporter 3 member 3 (AMT3-3) of Oryza sativa subsp. japonica (Rice).